Consider the following 146-residue polypeptide: Hemoglobin subunit beta (146 aa).

The residue at position 1 (Val-1) is an N-acetylvaline. The 145-residue stretch at 2-146 (HLSDGEKNAI…VANALAHKYH (145 aa)) folds into the Globin domain. Ser-44 bears the Phosphoserine mark. Lys-59 carries the N6-acetyllysine modification. His-63 lines the heme b pocket. Lys-82 carries the N6-acetyllysine modification. Residue His-92 coordinates heme b. Cys-93 carries the S-nitrosocysteine modification. The residue at position 144 (Lys-144) is an N6-acetyllysine.

The protein belongs to the globin family. As to quaternary structure, heterotetramer of two alpha chains and two beta chains. As to expression, red blood cells.

Its function is as follows. Involved in oxygen transport from the lung to the various peripheral tissues. This chain is Hemoglobin subunit beta (HBB), found in Spermophilus citellus (European ground squirrel).